Here is a 101-residue protein sequence, read N- to C-terminus: Interleukin-8 (101 aa).

The N-terminal stretch at 1 to 22 (MTSKLAVALLAAFLLSAALCEA) is a signal peptide. Citrulline is present on Arg27. 2 disulfide bridges follow: Cys34-Cys61 and Cys36-Cys77.

Belongs to the intercrine alpha (chemokine CxC) family. In terms of assembly, homodimer. Interacts with TNFAIP6 (via Link domain); this interaction interferes with chemokine binding to glycosaminoglycans. Post-translationally, citrullination at Arg-27 prevents proteolysis, and dampens tissue inflammation, it also enhances leukocytosis, possibly through impaired chemokine clearance from the blood circulation.

It is found in the secreted. Functionally, chemotactic factor that mediates inflammatory response by attracting neutrophils, basophils, and T-cells to clear pathogens and protect the host from infection. Also plays an important role in neutrophil activation. Released in response to an inflammatory stimulus, exerts its effect by binding to the G-protein-coupled receptors CXCR1 and CXCR2, primarily found in neutrophils, monocytes and endothelial cells. G-protein heterotrimer (alpha, beta, gamma subunits) constitutively binds to CXCR1/CXCR2 receptor and activation by IL8 leads to beta and gamma subunits release from Galpha (GNAI2 in neutrophils) and activation of several downstream signaling pathways including PI3K and MAPK pathways. This Ovis aries (Sheep) protein is Interleukin-8 (CXCL8).